Here is a 157-residue protein sequence, read N- to C-terminus: Arginine repressor (157 aa).

It belongs to the ArgR family.

It localises to the cytoplasm. The protein operates within amino-acid biosynthesis; L-arginine biosynthesis [regulation]. Its function is as follows. Regulates arginine biosynthesis genes. This is Arginine repressor from Deinococcus deserti (strain DSM 17065 / CIP 109153 / LMG 22923 / VCD115).